Here is an 83-residue protein sequence, read N- to C-terminus: Small ribosomal subunit protein uS17 (83 aa).

The protein belongs to the universal ribosomal protein uS17 family. Part of the 30S ribosomal subunit.

Its function is as follows. One of the primary rRNA binding proteins, it binds specifically to the 5'-end of 16S ribosomal RNA. The chain is Small ribosomal subunit protein uS17 from Francisella tularensis subsp. holarctica (strain FTNF002-00 / FTA).